The following is a 231-amino-acid chain: Elongation factor 1-delta (231 aa).

Residues 75–136 are disordered; that stretch reads SGVTVEGNAP…AAAAAAKPAK (62 aa). A compositionally biased stretch (acidic residues) spans 101–117; the sequence is ADDDDDDDVDLFGEETE. Positions 118-127 are enriched in basic and acidic residues; that stretch reads EEKKAAEERA.

Belongs to the EF-1-beta/EF-1-delta family. EF-1 is composed of 4 subunits: alpha, beta (1B-alpha=beta'), delta (1B-beta), and gamma (1B-gamma).

EF-1-beta and EF-1-beta' stimulate the exchange of GDP bound to EF-1-alpha to GTP. The polypeptide is Elongation factor 1-delta (Beta vulgaris (Sugar beet)).